The chain runs to 263 residues: Glutamate racemase (263 aa).

Substrate-binding positions include 12-13 (DS) and 44-45 (YG). Cys75 (proton donor/acceptor) is an active-site residue. 76–77 (NT) lines the substrate pocket. The active-site Proton donor/acceptor is Cys186. Substrate is bound at residue 187 to 188 (TH).

Belongs to the aspartate/glutamate racemases family.

It catalyses the reaction L-glutamate = D-glutamate. The protein operates within cell wall biogenesis; peptidoglycan biosynthesis. Its function is as follows. Provides the (R)-glutamate required for cell wall biosynthesis. This Ectopseudomonas mendocina (strain ymp) (Pseudomonas mendocina) protein is Glutamate racemase.